A 509-amino-acid chain; its full sequence is UDP-N-acetylmuramyl-tripeptide synthetase (509 aa).

Ser30 is a binding site for UDP-N-acetyl-alpha-D-muramoyl-L-alanyl-D-glutamate. ATP is bound at residue Gly111 to Thr117. UDP-N-acetyl-alpha-D-muramoyl-L-alanyl-D-glutamate contacts are provided by residues Ser155–Thr156, Thr182, and Arg192. Lys224 carries the N6-carboxylysine modification.

The protein belongs to the MurCDEF family. MurE subfamily. Post-translationally, carboxylation is probably crucial for Mg(2+) binding and, consequently, for the gamma-phosphate positioning of ATP.

It localises to the cytoplasm. The protein operates within cell wall biogenesis; peptidoglycan biosynthesis. Catalyzes the addition of an amino acid to the nucleotide precursor UDP-N-acetylmuramoyl-L-alanyl-D-glutamate (UMAG) in the biosynthesis of bacterial cell-wall peptidoglycan. The sequence is that of UDP-N-acetylmuramyl-tripeptide synthetase from Roseiflexus sp. (strain RS-1).